The chain runs to 462 residues: Argininosuccinate lyase 2 (462 aa).

This sequence belongs to the lyase 1 family. Argininosuccinate lyase subfamily.

The protein localises to the cytoplasm. It catalyses the reaction 2-(N(omega)-L-arginino)succinate = fumarate + L-arginine. It participates in amino-acid biosynthesis; L-arginine biosynthesis; L-arginine from L-ornithine and carbamoyl phosphate: step 3/3. In Shouchella clausii (strain KSM-K16) (Alkalihalobacillus clausii), this protein is Argininosuccinate lyase 2.